Here is a 447-residue protein sequence, read N- to C-terminus: Argininosuccinate synthase (447 aa).

Residues 17–25 and alanine 43 contribute to the ATP site; that span reads AFSGGLDTS. Position 99 (tyrosine 99) interacts with L-citrulline. ATP-binding residues include glycine 129 and threonine 131. Positions 131, 135, and 136 each coordinate L-aspartate. L-citrulline is bound at residue asparagine 135. Residue aspartate 136 coordinates ATP. Residues arginine 139 and serine 192 each coordinate L-citrulline. Aspartate 194 contributes to the ATP binding site. Threonine 201, glutamate 203, and glutamate 280 together coordinate L-citrulline.

Belongs to the argininosuccinate synthase family. Type 2 subfamily. Homotetramer.

The protein localises to the cytoplasm. The catalysed reaction is L-citrulline + L-aspartate + ATP = 2-(N(omega)-L-arginino)succinate + AMP + diphosphate + H(+). The protein operates within amino-acid biosynthesis; L-arginine biosynthesis; L-arginine from L-ornithine and carbamoyl phosphate: step 2/3. The protein is Argininosuccinate synthase of Escherichia coli O1:K1 / APEC.